The following is a 423-amino-acid chain: Histidine--tRNA ligase (423 aa).

It belongs to the class-II aminoacyl-tRNA synthetase family. In terms of assembly, homodimer.

It localises to the cytoplasm. It catalyses the reaction tRNA(His) + L-histidine + ATP = L-histidyl-tRNA(His) + AMP + diphosphate + H(+). The sequence is that of Histidine--tRNA ligase from Geobacillus sp. (strain WCH70).